The primary structure comprises 327 residues: Tartrate-resistant acid phosphatase type 5 (327 aa).

An N-terminal signal peptide occupies residues 1 to 22; that stretch reads MDTWMVLLGLQILLLPLLAHCT. Residues Asp-35, Asp-73, Tyr-76, and Asn-112 each contribute to the Fe cation site. 2 N-linked (GlcNAc...) asparagine glycosylation sites follow: Asn-118 and Asn-149. A disulfide bond links Cys-163 and Cys-221. His-207, His-242, and His-244 together coordinate Fe cation.

In terms of assembly, exists either as monomer or, after proteolytic processing, as a dimer of two chains linked by disulfide bond(s). The cofactor is Fe cation. In terms of tissue distribution, characteristic constituent of osteoclasts and some mononuclear preosteoclasts. Preferentially expressed in skeletal tissues.

It localises to the lysosome. The enzyme catalyses a phosphate monoester + H2O = an alcohol + phosphate. In terms of biological role, may play a role in the process of bone resorption. The osteoclastic trap acts on nucleotide tri- and diphosphates with higher affinity, compared with other substrates. The sequence is that of Tartrate-resistant acid phosphatase type 5 (Acp5) from Rattus norvegicus (Rat).